An 86-amino-acid chain; its full sequence is Neuropeptide-like 2 (86 aa).

The signal sequence occupies residues 1–19; it reads MAKLAICILVFALFALALS. 2 consecutive propeptides follow at residues 20 to 34 and 45 to 86; these read ARVP…QEFL and IEKL…AAST.

In terms of tissue distribution, hemolymph (at protein level).

The protein localises to the secreted. In Drosophila melanogaster (Fruit fly), this protein is Neuropeptide-like 2 (Nplp2).